Consider the following 403-residue polypeptide: Large ribosomal subunit protein uL3 (403 aa).

Residues 1-37 are disordered; it reads MSHRKFSAPRHGSLGFLPRKRSSRHRGKVKSFPKDDP. Ser-13 is modified (phosphoserine). A compositionally biased stretch (basic residues) spans 18-31; that stretch reads PRKRSSRHRGKVKS. A Glycyl lysine isopeptide (Lys-Gly) (interchain with G-Cter in SUMO2) cross-link involves residue Lys-39. Position 136 is an N6-acetyllysine (Lys-136). Residues Lys-224 and Lys-226 each participate in a glycyl lysine isopeptide (Lys-Gly) (interchain with G-Cter in SUMO2) cross-link. Position 245 is a tele-methylhistidine (His-245). 2 positions are modified to N6-acetyllysine; alternate: Lys-286 and Lys-294. A Glycyl lysine isopeptide (Lys-Gly) (interchain with G-Cter in SUMO2); alternate cross-link involves residue Lys-286. Lys-294 participates in a covalent cross-link: Glycyl lysine isopeptide (Lys-Gly) (interchain with G-Cter in SUMO1); alternate. The residue at position 304 (Ser-304) is a Phosphoserine. Lys-366 bears the N6-acetyllysine; alternate mark. A Glycyl lysine isopeptide (Lys-Gly) (interchain with G-Cter in SUMO2); alternate cross-link involves residue Lys-366. Residue Lys-373 is modified to N6-acetyllysine. Residues Lys-386, Lys-393, and Lys-399 each participate in a glycyl lysine isopeptide (Lys-Gly) (interchain with G-Cter in SUMO2) cross-link.

The protein belongs to the universal ribosomal protein uL3 family. Component of the large ribosomal subunit. Interacts with DHX33. In terms of processing, constitutively monomethylated at His-245 by METTL18. Methylation at His-245 regulates translation elongation by slowing ribosome traversal on tyrosine codons: slower elongation provides enough time for proper folding of synthesized proteins and prevents cellular aggregation of tyrosine-rich proteins. It is not required for incorporation of RPL3 into ribosomes.

It localises to the nucleus. Its subcellular location is the nucleolus. The protein resides in the cytoplasm. Functionally, component of the large ribosomal subunit. The ribosome is a large ribonucleoprotein complex responsible for the synthesis of proteins in the cell. This chain is Large ribosomal subunit protein uL3 (Rpl3), found in Rattus norvegicus (Rat).